A 478-amino-acid polypeptide reads, in one-letter code: MVQLNQDFIKSIAKDMPAHLSMDDFISYSSKPLRPSIRINTLKISSQDFIALMAPKGWTLEPIPWCQDGFWISLDSDVQLGNTVEHLQGLFYIQEASSMLPPIALFSTKTDKAEHTILDMASAPGSKTTQIAAMMDNSGLLIANEYSSSRVKVLHANVLRMGVSNTALTHFDARVFGEYLYDQFDAILLDAPCSGEGTIRKDPLALNNWGLAENSAIAETQKALLESAFLALKTGGSLVYSTCALSKLENQDVCEHLRSTFPEAVEFESLATLFPDADKACTDEGFLHVWPQIYDSEGFFIAKITKTCDVERQKPEPKRQKNFPFTPISSKVELELRQYFKQTFDIDIPTDDMLMVRDLEYWLFPAGMKTLIGKMRFQRIGVKLADGLKKGFKARHEAIVALAEKSTGYELSQAQAIQYLMGRDIPLVDGGKPQGELIVTYHGSALGVAKHLGSRLKNTLPRDLVRDKIADSDASTTA.

Residues 121 to 127 (ASAPGSK), E145, D172, and D190 each bind S-adenosyl-L-methionine. C243 acts as the Nucleophile in catalysis.

The protein belongs to the class I-like SAM-binding methyltransferase superfamily. RsmB/NOP family.

It localises to the cytoplasm. The enzyme catalyses cytidine(1407) in 16S rRNA + S-adenosyl-L-methionine = 5-methylcytidine(1407) in 16S rRNA + S-adenosyl-L-homocysteine + H(+). In terms of biological role, specifically methylates the cytosine at position 1407 (m5C1407) of 16S rRNA. The chain is Ribosomal RNA small subunit methyltransferase F from Shewanella sediminis (strain HAW-EB3).